A 1033-amino-acid chain; its full sequence is Potassium-transporting ATPase alpha chain 1 (1033 aa).

Residues 1-96 (MGKENYELYS…NALRPPRGTP (96 aa)) are Cytoplasmic-facing. Y6 and Y9 each carry phosphotyrosine. The tract at residues 14–39 (GTGPGGDMAAKMSKKKAGGGGGKKKE) is disordered. Basic residues predominate over residues 25 to 38 (MSKKKAGGGGGKKK). S26 carries the post-translational modification Phosphoserine. A helical membrane pass occupies residues 97–117 (EYVKFARQLAGGLQCLMWVAA). Residues 118 to 140 (AICLIAFAIQASEGDLTTDDNLY) are Lumenal-facing. A helical membrane pass occupies residues 141 to 161 (LALALIAVVVVTGCFGYYQEF). At 162–297 (KSTNIIASFK…NEKTPIAIEI (136 aa)) the chain is on the cytoplasmic side. A helical membrane pass occupies residues 298 to 317 (EHFVDIIAGLAILFGATFFV). The Lumenal segment spans residues 318–329 (VAMCIGYTFLRA). Residues 330–347 (MVFFMAIVVAYVPEGLLA) form a helical membrane-spanning segment. V338, A339, V341, and E343 together coordinate K(+). Residues 348–781 (TVTVCLSLTA…EQGRLIFDNL (434 aa)) lie on the Cytoplasmic side of the membrane. D385 functions as the 4-aspartylphosphate intermediate in the catalytic mechanism. Mg(2+)-binding residues include D385 and T387. 2 positions are modified to phosphoserine: S461 and S599. Mg(2+)-binding residues include D726 and D730. Residues 782–801 (KKSIAYTLTKNIPELTPYLI) traverse the membrane as a helical segment. Residue E795 coordinates K(+). The Lumenal portion of the chain corresponds to 802–811 (YITVSVPLPL). A helical transmembrane segment spans residues 812 to 832 (GCITILFIELCTDIFPSVSLA). E820 contributes to the K(+) binding site. The Cytoplasmic portion of the chain corresponds to 833–852 (YEKAESDIMHLRPRNPRRDR). S838 is subject to Phosphoserine. The chain crosses the membrane as a helical span at residues 853-875 (LVNEPLAAYSYFQIGAIQSFAGF). Residues 876 to 927 (ADYFTAMAQEGWFPLLCVGLRPQWEDHHLQDLQDSYGQEWTFGQRLYQQYTC) lie on the Lumenal side of the membrane. A helical transmembrane segment spans residues 928–947 (YTVFFISIEMCQIADVLIRK). The Cytoplasmic portion of the chain corresponds to 948–961 (TRRLSAFQQGFFRN). A Phosphoserine; by PKA modification is found at S952. The helical transmembrane segment at 962–980 (RILVIAIVFQVCIGCFLCY) threads the bilayer. At 981–995 (CPGMPNIFNFMPIRF) the chain is on the lumenal side. Residues 996–1016 (QWWLVPMPFGLLIFVYDEIRK) form a helical membrane-spanning segment. Residues 1017-1033 (LGVRCCPGSWWDQELYY) are Cytoplasmic-facing.

Belongs to the cation transport ATPase (P-type) (TC 3.A.3) family. Type IIC subfamily. The gastric H(+)/K(+) ATPase pump is composed of the catalytic alpha subunit ATP4A and the regulatory beta subunit ATP4B. Interacts (via the P-domain) with ATP4B (via N-terminus); this interaction stabilizes the lumenal-open E2 conformation state and prevents the reverse reaction of the transport cycle.

It localises to the apical cell membrane. The catalysed reaction is K(+)(out) + ATP + H2O + H(+)(in) = K(+)(in) + ADP + phosphate + 2 H(+)(out). Its function is as follows. The catalytic subunit of the gastric H(+)/K(+) ATPase pump which transports H(+) ions in exchange for K(+) ions across the apical membrane of parietal cells. Uses ATP as an energy source to pump H(+) ions to the gastric lumen while transporting K(+) ion from the lumen into the cell. Remarkably generates a million-fold proton gradient across the gastric parietal cell membrane, acidifying the gastric juice down to pH 1. Within a transport cycle, the transfer of a H(+) ion across the membrane is coupled to ATP hydrolysis and is associated with a transient phosphorylation that shifts the pump conformation from inward-facing (E1) to outward-facing state (E2). The release of the H(+) ion in the stomach lumen is followed by binding of K(+) ion converting the pump conformation back to the E1 state. In Rattus norvegicus (Rat), this protein is Potassium-transporting ATPase alpha chain 1 (Atp4a).